The sequence spans 584 residues: DNA mismatch repair protein MutL (584 aa).

It belongs to the DNA mismatch repair MutL/HexB family.

Functionally, this protein is involved in the repair of mismatches in DNA. It is required for dam-dependent methyl-directed DNA mismatch repair. May act as a 'molecular matchmaker', a protein that promotes the formation of a stable complex between two or more DNA-binding proteins in an ATP-dependent manner without itself being part of a final effector complex. The chain is DNA mismatch repair protein MutL from Buchnera aphidicola subsp. Acyrthosiphon pisum (strain Tuc7).